Consider the following 271-residue polypeptide: ATP synthase subunit delta (271 aa).

The protein belongs to the ATPase delta chain family. As to quaternary structure, F-type ATPases have 2 components, F(1) - the catalytic core - and F(0) - the membrane proton channel. F(1) has five subunits: alpha(3), beta(3), gamma(1), delta(1), epsilon(1). F(0) has three main subunits: a(1), b(2) and c(10-14). The alpha and beta chains form an alternating ring which encloses part of the gamma chain. F(1) is attached to F(0) by a central stalk formed by the gamma and epsilon chains, while a peripheral stalk is formed by the delta and b chains.

It is found in the cell membrane. F(1)F(0) ATP synthase produces ATP from ADP in the presence of a proton or sodium gradient. F-type ATPases consist of two structural domains, F(1) containing the extramembraneous catalytic core and F(0) containing the membrane proton channel, linked together by a central stalk and a peripheral stalk. During catalysis, ATP synthesis in the catalytic domain of F(1) is coupled via a rotary mechanism of the central stalk subunits to proton translocation. In terms of biological role, this protein is part of the stalk that links CF(0) to CF(1). It either transmits conformational changes from CF(0) to CF(1) or is implicated in proton conduction. The sequence is that of ATP synthase subunit delta from Corynebacterium kroppenstedtii (strain DSM 44385 / JCM 11950 / CIP 105744 / CCUG 35717).